The chain runs to 623 residues: Low affinity potassium transport system protein Kup (623 aa).

A run of 12 helical transmembrane segments spans residues 9–29 (LPAI…TSPL), 49–69 (VFGF…FKYL), 101–121 (VLVI…VITP), 137–157 (PSLD…LFMI), 163–183 (GMVG…LAVL), 212–232 (AVSF…EALY), 247–267 (WFSV…ALLL), 276–296 (PFFL…ATLA), 337–357 (IYIP…IVSF), 363–383 (LAAA…ILFA), 395–415 (ILVG…FSAN), and 419–439 (LFSG…IMTT).

Belongs to the HAK/KUP transporter (TC 2.A.72) family.

It is found in the cell inner membrane. It catalyses the reaction K(+)(in) + H(+)(in) = K(+)(out) + H(+)(out). Its function is as follows. Responsible for the low-affinity transport of potassium into the cell. Likely operates as a K(+):H(+) symporter. The protein is Low affinity potassium transport system protein Kup of Cronobacter sakazakii (strain ATCC BAA-894) (Enterobacter sakazakii).